Here is a 113-residue protein sequence, read N- to C-terminus: U11-theraphotoxin-Hhn1a (113 aa).

The first 21 residues, 1 to 21, serve as a signal peptide directing secretion; it reads MNTVRVTFLLVFVLAVSLGQA. A propeptide spanning residues 22 to 74 is cleaved from the precursor; the sequence is DKDENRMEMQEKAEQGKSYLDFAENLLLQKLEELEAKLLEEDSEESRNSRQKR. Cystine bridges form between Cys-75-Cys-90, Cys-82-Cys-95, and Cys-89-Cys-110.

It belongs to the neurotoxin 14 (magi-1) family. 01 (HNTX-16) subfamily. As to expression, expressed by the venom gland.

The protein resides in the secreted. In terms of biological role, probable ion channel inhibitor. In Cyriopagopus hainanus (Chinese bird spider), this protein is U11-theraphotoxin-Hhn1a.